A 284-amino-acid polypeptide reads, in one-letter code: Nucleotide-binding protein TTE1834 (284 aa).

Residue 8–15 (GLSGAGKT) participates in ATP binding. Position 58–61 (58–61 (DLRG)) interacts with GTP.

Belongs to the RapZ-like family.

Displays ATPase and GTPase activities. This is Nucleotide-binding protein TTE1834 from Caldanaerobacter subterraneus subsp. tengcongensis (strain DSM 15242 / JCM 11007 / NBRC 100824 / MB4) (Thermoanaerobacter tengcongensis).